The following is a 433-amino-acid chain: Anthranilate synthase component 1 (433 aa).

L-tryptophan is bound by residues Ser29 and 219 to 221 (PYT). 253 to 254 (GT) serves as a coordination point for chorismate. Residue Glu280 coordinates Mg(2+). Chorismate contacts are provided by residues Tyr368, Arg388, 402–404 (GAG), and Gly404. Glu417 contributes to the Mg(2+) binding site.

The protein belongs to the anthranilate synthase component I family. Heterotetramer consisting of two non-identical subunits: a beta subunit (TrpG) and a large alpha subunit (TrpE). Requires Mg(2+) as cofactor.

The catalysed reaction is chorismate + L-glutamine = anthranilate + pyruvate + L-glutamate + H(+). Its pathway is amino-acid biosynthesis; L-tryptophan biosynthesis; L-tryptophan from chorismate: step 1/5. With respect to regulation, feedback inhibited by tryptophan. In terms of biological role, part of a heterotetrameric complex that catalyzes the two-step biosynthesis of anthranilate, an intermediate in the biosynthesis of L-tryptophan. In the first step, the glutamine-binding beta subunit (TrpG) of anthranilate synthase (AS) provides the glutamine amidotransferase activity which generates ammonia as a substrate that, along with chorismate, is used in the second step, catalyzed by the large alpha subunit of AS (TrpE) to produce anthranilate. In the absence of TrpG, TrpE can synthesize anthranilate directly from chorismate and high concentrations of ammonia. The polypeptide is Anthranilate synthase component 1 (trpE) (Thermococcus kodakarensis (strain ATCC BAA-918 / JCM 12380 / KOD1) (Pyrococcus kodakaraensis (strain KOD1))).